Consider the following 254-residue polypeptide: MDYFAKRIIPCLDVNEGRVVKGVNFVGLRDAGDPVEVAKRYNEEGADEITFLDIGASHEGRDTIVDVVKKVAQEVFIPLTVGGGIRELPDIYNLLNVGCDKVSINSAAIKRPEFIEEGAKRFGSQCIVVAIDAKRVGNGKWHIFTHGGRNDTGIDALQWAKEAYERGAGELLVTSMDADGTKAGFDNELNRKIGELVNIPVIASGGAGTMQHIEEAFTLGNADAALAASIFHFREIDIMELKHYLKTKNIPVRI.

Residues aspartate 13 and aspartate 132 contribute to the active site.

It belongs to the HisA/HisF family. As to quaternary structure, heterodimer of HisH and HisF.

It is found in the cytoplasm. The enzyme catalyses 5-[(5-phospho-1-deoxy-D-ribulos-1-ylimino)methylamino]-1-(5-phospho-beta-D-ribosyl)imidazole-4-carboxamide + L-glutamine = D-erythro-1-(imidazol-4-yl)glycerol 3-phosphate + 5-amino-1-(5-phospho-beta-D-ribosyl)imidazole-4-carboxamide + L-glutamate + H(+). Its pathway is amino-acid biosynthesis; L-histidine biosynthesis; L-histidine from 5-phospho-alpha-D-ribose 1-diphosphate: step 5/9. Its function is as follows. IGPS catalyzes the conversion of PRFAR and glutamine to IGP, AICAR and glutamate. The HisF subunit catalyzes the cyclization activity that produces IGP and AICAR from PRFAR using the ammonia provided by the HisH subunit. This is Imidazole glycerol phosphate synthase subunit HisF from Sulfurovum sp. (strain NBC37-1).